Here is a 532-residue protein sequence, read N- to C-terminus: Phosphoenolpyruvate carboxylase (532 aa).

The protein belongs to the PEPCase type 2 family. Homotetramer. Mg(2+) is required as a cofactor.

The enzyme catalyses oxaloacetate + phosphate = phosphoenolpyruvate + hydrogencarbonate. Catalyzes the irreversible beta-carboxylation of phosphoenolpyruvate (PEP) to form oxaloacetate (OAA), a four-carbon dicarboxylic acid source for the tricarboxylic acid cycle. This chain is Phosphoenolpyruvate carboxylase, found in Methanopyrus kandleri (strain AV19 / DSM 6324 / JCM 9639 / NBRC 100938).